The sequence spans 158 residues: Sec-independent protein translocase protein TatB (158 aa).

The helical transmembrane segment at 1 to 21 threads the bilayer; the sequence is MFDIGWSELLVIGVVALVVVG. The interval 73–158 is disordered; the sequence is RSMGLDAMKQ…PAPAEPKSNA (86 aa). The span at 83-92 shows a compositional bias: basic and acidic residues; the sequence is AADRFEKWDP. Composition is skewed to low complexity over residues 94 to 132 and 138 to 158; these read KPQQ…SEPA and APAA…KSNA.

The protein belongs to the TatB family. The Tat system comprises two distinct complexes: a TatABC complex, containing multiple copies of TatA, TatB and TatC subunits, and a separate TatA complex, containing only TatA subunits. Substrates initially bind to the TatABC complex, which probably triggers association of the separate TatA complex to form the active translocon.

It is found in the cell inner membrane. Functionally, part of the twin-arginine translocation (Tat) system that transports large folded proteins containing a characteristic twin-arginine motif in their signal peptide across membranes. Together with TatC, TatB is part of a receptor directly interacting with Tat signal peptides. TatB may form an oligomeric binding site that transiently accommodates folded Tat precursor proteins before their translocation. The chain is Sec-independent protein translocase protein TatB from Cereibacter sphaeroides (strain ATCC 17029 / ATH 2.4.9) (Rhodobacter sphaeroides).